The following is a 123-amino-acid chain: Small ribosomal subunit protein uS12 (123 aa).

The segment covering lysine 10 to threonine 20 has biased composition (basic residues). The interval lysine 10 to glycine 32 is disordered. Aspartate 89 is modified (3-methylthioaspartic acid).

This sequence belongs to the universal ribosomal protein uS12 family. Part of the 30S ribosomal subunit. Contacts proteins S8 and S17. May interact with IF1 in the 30S initiation complex.

Its function is as follows. With S4 and S5 plays an important role in translational accuracy. Interacts with and stabilizes bases of the 16S rRNA that are involved in tRNA selection in the A site and with the mRNA backbone. Located at the interface of the 30S and 50S subunits, it traverses the body of the 30S subunit contacting proteins on the other side and probably holding the rRNA structure together. The combined cluster of proteins S8, S12 and S17 appears to hold together the shoulder and platform of the 30S subunit. This is Small ribosomal subunit protein uS12 from Halothermothrix orenii (strain H 168 / OCM 544 / DSM 9562).